The primary structure comprises 133 residues: Small ribosomal subunit protein uS8 (133 aa).

It belongs to the universal ribosomal protein uS8 family. In terms of assembly, part of the 30S ribosomal subunit. Contacts proteins S5 and S12.

Its function is as follows. One of the primary rRNA binding proteins, it binds directly to 16S rRNA central domain where it helps coordinate assembly of the platform of the 30S subunit. In Trichodesmium erythraeum (strain IMS101), this protein is Small ribosomal subunit protein uS8.